The following is a 206-amino-acid chain: Large ribosomal subunit protein uL4 (206 aa).

Positions 46–77 (GTRAQKDREQVKHSTKKPFKQKGTGRARAGMT) are disordered. Residues 58–70 (HSTKKPFKQKGTG) are compositionally biased toward basic residues.

It belongs to the universal ribosomal protein uL4 family. In terms of assembly, part of the 50S ribosomal subunit.

One of the primary rRNA binding proteins, this protein initially binds near the 5'-end of the 23S rRNA. It is important during the early stages of 50S assembly. It makes multiple contacts with different domains of the 23S rRNA in the assembled 50S subunit and ribosome. In terms of biological role, forms part of the polypeptide exit tunnel. This Albidiferax ferrireducens (strain ATCC BAA-621 / DSM 15236 / T118) (Rhodoferax ferrireducens) protein is Large ribosomal subunit protein uL4.